A 223-amino-acid polypeptide reads, in one-letter code: GTP-binding nuclear protein Ran (223 aa).

Residues 8-172 (VVAEFKLVLV…LWILRKLTGD (165 aa)) enclose the Small GTPase Ran-type domain. 19 to 26 (DGGVGKTT) provides a ligand contact to GTP. The tract at residues 38–46 (KRYIATQGV) is switch-I. GTP is bound by residues Gly69, 123–126 (NKVD), and 151–153 (SAK). Positions 69–85 (GQEKLGGLREGYYIGAD) are switch-II.

The protein belongs to the small GTPase superfamily. Ran family. As to quaternary structure, monomer. Found in a nuclear export complex with RanGTP, exportin and pre-miRNA.

The protein resides in the nucleus. In terms of biological role, GTP-binding protein involved in nucleocytoplasmic transport. Required for the import of protein into the nucleus and also for RNA export. Involved in chromatin condensation and control of cell cycle. This is GTP-binding nuclear protein Ran from Tetrahymena pyriformis.